A 191-amino-acid chain; its full sequence is Inosine triphosphate pyrophosphatase (191 aa).

Residue 9-14 (TGNAKK) coordinates ITP. A Mg(2+)-binding site is contributed by Glu-39. Residues Lys-51, 67–68 (DT), Lys-84, 143–146 (FGWD), Lys-166, and 171–172 (HR) contribute to the ITP site.

Belongs to the HAM1 NTPase family. As to quaternary structure, homodimer. Mg(2+) serves as cofactor. Requires Mn(2+) as cofactor.

The protein localises to the cytoplasm. It catalyses the reaction ITP + H2O = IMP + diphosphate + H(+). The catalysed reaction is dITP + H2O = dIMP + diphosphate + H(+). The enzyme catalyses XTP + H2O = XMP + diphosphate + H(+). Pyrophosphatase that hydrolyzes non-canonical purine nucleotides such as inosine triphosphate (ITP), deoxyinosine triphosphate (dITP) or xanthosine 5'-triphosphate (XTP) to their respective monophosphate derivatives. The enzyme does not distinguish between the deoxy- and ribose forms. Probably excludes non-canonical purines from RNA and DNA precursor pools, thus preventing their incorporation into RNA and DNA and avoiding chromosomal lesions. The sequence is that of Inosine triphosphate pyrophosphatase from Drosophila melanogaster (Fruit fly).